The sequence spans 113 residues: Hydrogenase maturation factor HypA (113 aa).

Histidine 2 serves as a coordination point for Ni(2+). Residues cysteine 73, cysteine 76, cysteine 89, and cysteine 92 each coordinate Zn(2+).

Belongs to the HypA/HybF family.

Involved in the maturation of [NiFe] hydrogenases. Required for nickel insertion into the metal center of the hydrogenase. This chain is Hydrogenase maturation factor HypA, found in Rhodobacter capsulatus (Rhodopseudomonas capsulata).